The chain runs to 2801 residues: Neurobeachin-like protein 2 (2801 aa).

The interval 1379–1529 (RHEEEYEEEE…TISNTSNPQA (151 aa)) is disordered. A compositionally biased stretch (acidic residues) spans 1383-1393 (EYEEEEGETQD). 4 stretches are compositionally biased toward polar residues: residues 1400–1413 (DLSQSPPSTGQLKN), 1424–1437 (GDQSSHSSTLSNTV), 1470–1481 (KGPQTPVGSQPE), and 1500–1528 (SSSLSNVLDDTSYSTEPPTDTISNTSNPQ). The region spanning 1986–2086 (SQKEKLVLSE…VRNKVYSRIL (101 aa)) is the BEACH-type PH domain. Residues 2099-2391 (RSPQELLKAS…QLLKEPHPPR (293 aa)) form the BEACH domain. 7 WD repeats span residues 2431–2468 (LVQAVVPRNQTRSFIIPGSDILVTVSANGMIGTHSWLP), 2492–2535 (RFLS…MLGK), 2538–2575 (LVGRICRHIDVVTCLALDLCGIYLISGSRDTTCMVWQV), 2588–2626 (RPIQVLCGHDQEVTCVAISTELDMAISGSKDGTVIVHSV), 2633–2676 (WTLR…RYAL), 2684–2719 (TLLASETLDEKISALYLVPDYLIVGTQQGNLHIRDL), and 2727–2762 (APLALKVPVRCVSVTKESSHILVGLEDGKLIVVGAG).

The protein belongs to the WD repeat neurobeachin family.

The protein localises to the endoplasmic reticulum. Functionally, involved in thrombopoiesis. Plays a role in the development or secretion of alpha-granules, that contain several growth factors important for platelet biogenesis. The chain is Neurobeachin-like protein 2 (nbeal2) from Danio rerio (Zebrafish).